The sequence spans 337 residues: Glyceraldehyde-3-phosphate dehydrogenase (337 aa).

NAD(+) is bound by residues Arg-12 to Ile-13, Asp-34, and Lys-79. Residues Ser-150–Thr-152, Thr-181, Thr-210–Gly-211, and Arg-233 contribute to the D-glyceraldehyde 3-phosphate site. Catalysis depends on Cys-151, which acts as the Nucleophile. Residue Asn-315 coordinates NAD(+).

The protein belongs to the glyceraldehyde-3-phosphate dehydrogenase family. Homotetramer.

The protein resides in the cytoplasm. It carries out the reaction D-glyceraldehyde 3-phosphate + phosphate + NAD(+) = (2R)-3-phospho-glyceroyl phosphate + NADH + H(+). It functions in the pathway carbohydrate degradation; glycolysis; pyruvate from D-glyceraldehyde 3-phosphate: step 1/5. This chain is Glyceraldehyde-3-phosphate dehydrogenase (GPD), found in Cochliobolus lunatus (Filamentous fungus).